A 359-amino-acid chain; its full sequence is Very-long-chain (3R)-3-hydroxyacyl-CoA dehydratase (359 aa).

Residues Met-1–Lys-144 lie on the Cytoplasmic side of the membrane. Positions Ala-3–Thr-92 constitute a CS domain. The stretch at Leu-109–Arg-133 forms a coiled coil. Residues Gly-145 to Met-165 form a helical membrane-spanning segment. Topologically, residues Thr-166–Asp-186 are lumenal. Residues Val-187–Val-207 traverse the membrane as a helical segment. Topologically, residues Lys-208–Thr-209 are cytoplasmic. The chain crosses the membrane as a helical span at residues Gly-210–Gly-230. The Lumenal segment spans residues Ser-231–Pro-239. Residues Val-240–Met-260 form a helical membrane-spanning segment. The Cytoplasmic portion of the chain corresponds to Leu-261–Thr-277. Residues Ile-278–Ile-298 form a helical membrane-spanning segment. Residues Tyr-283 and Glu-290 contribute to the active site. Residues Pro-299–Leu-317 lie on the Lumenal side of the membrane. A helical membrane pass occupies residues Ser-318–Ile-338. Topologically, residues Asn-339–Asn-359 are cytoplasmic.

Belongs to the very long-chain fatty acids dehydratase HACD family.

The protein resides in the endoplasmic reticulum membrane. It carries out the reaction a very-long-chain (3R)-3-hydroxyacyl-CoA = a very-long-chain (2E)-enoyl-CoA + H2O. It catalyses the reaction (3R)-hydroxyhexadecanoyl-CoA = (2E)-hexadecenoyl-CoA + H2O. The protein operates within lipid metabolism; fatty acid biosynthesis. Functionally, catalyzes the third of the four reactions of the long-chain fatty acids elongation cycle. This endoplasmic reticulum-bound enzymatic process, allows the addition of two carbons to the chain of long- and very long-chain fatty acids/VLCFAs per cycle. This enzyme catalyzes the dehydration of the 3-hydroxyacyl-CoA intermediate into trans-2,3-enoyl-CoA, within each cycle of fatty acid elongation. Thereby, it participates in the production of VLCFAs of different chain lengths that are involved in multiple biological processes as precursors of membrane lipids and lipid mediators. Involved in Rac1-signaling pathways leading to the modulation of gene expression. The sequence is that of Very-long-chain (3R)-3-hydroxyacyl-CoA dehydratase from Danio rerio (Zebrafish).